The following is a 186-amino-acid chain: Imidazoleglycerol-phosphate dehydratase (186 aa).

Belongs to the imidazoleglycerol-phosphate dehydratase family.

Its subcellular location is the cytoplasm. It carries out the reaction D-erythro-1-(imidazol-4-yl)glycerol 3-phosphate = 3-(imidazol-4-yl)-2-oxopropyl phosphate + H2O. It functions in the pathway amino-acid biosynthesis; L-histidine biosynthesis; L-histidine from 5-phospho-alpha-D-ribose 1-diphosphate: step 6/9. This is Imidazoleglycerol-phosphate dehydratase from Dictyoglomus thermophilum (strain ATCC 35947 / DSM 3960 / H-6-12).